The sequence spans 80 residues: Acyl carrier protein (80 aa).

In terms of domain architecture, Carrier spans 4–79 (EAILEKVRSI…DAVKYIEDKQ (76 aa)). At serine 39 the chain carries O-(pantetheine 4'-phosphoryl)serine.

This sequence belongs to the acyl carrier protein (ACP) family. Post-translationally, 4'-phosphopantetheine is transferred from CoA to a specific serine of apo-ACP by AcpS. This modification is essential for activity because fatty acids are bound in thioester linkage to the sulfhydryl of the prosthetic group.

The protein resides in the cytoplasm. The protein operates within lipid metabolism; fatty acid biosynthesis. Carrier of the growing fatty acid chain in fatty acid biosynthesis. In Synechococcus sp. (strain CC9902), this protein is Acyl carrier protein.